The chain runs to 73 residues: UPF0435 protein Lm4b_01721 (73 aa).

The protein belongs to the UPF0435 family.

In Listeria monocytogenes serotype 4b (strain CLIP80459), this protein is UPF0435 protein Lm4b_01721.